The sequence spans 142 residues: Large ribosomal subunit protein uL13 (142 aa).

It belongs to the universal ribosomal protein uL13 family. In terms of assembly, part of the 50S ribosomal subunit.

Functionally, this protein is one of the early assembly proteins of the 50S ribosomal subunit, although it is not seen to bind rRNA by itself. It is important during the early stages of 50S assembly. This is Large ribosomal subunit protein uL13 from Marinomonas sp. (strain MWYL1).